The following is a 301-amino-acid chain: Phosphatidylserine decarboxylase proenzyme (301 aa).

Residues aspartate 117, histidine 173, and serine 260 each act as charge relay system; for autoendoproteolytic cleavage activity in the active site. Serine 260 serves as the catalytic Schiff-base intermediate with substrate; via pyruvic acid; for decarboxylase activity. Residue serine 260 is modified to Pyruvic acid (Ser); by autocatalysis.

Belongs to the phosphatidylserine decarboxylase family. PSD-B subfamily. Prokaryotic type II sub-subfamily. Heterodimer of a large membrane-associated beta subunit and a small pyruvoyl-containing alpha subunit. Requires pyruvate as cofactor. In terms of processing, is synthesized initially as an inactive proenzyme. Formation of the active enzyme involves a self-maturation process in which the active site pyruvoyl group is generated from an internal serine residue via an autocatalytic post-translational modification. Two non-identical subunits are generated from the proenzyme in this reaction, and the pyruvate is formed at the N-terminus of the alpha chain, which is derived from the carboxyl end of the proenzyme. The autoendoproteolytic cleavage occurs by a canonical serine protease mechanism, in which the side chain hydroxyl group of the serine supplies its oxygen atom to form the C-terminus of the beta chain, while the remainder of the serine residue undergoes an oxidative deamination to produce ammonia and the pyruvoyl prosthetic group on the alpha chain. During this reaction, the Ser that is part of the protease active site of the proenzyme becomes the pyruvoyl prosthetic group, which constitutes an essential element of the active site of the mature decarboxylase.

It localises to the cell membrane. The catalysed reaction is a 1,2-diacyl-sn-glycero-3-phospho-L-serine + H(+) = a 1,2-diacyl-sn-glycero-3-phosphoethanolamine + CO2. The protein operates within phospholipid metabolism; phosphatidylethanolamine biosynthesis; phosphatidylethanolamine from CDP-diacylglycerol: step 2/2. Functionally, catalyzes the formation of phosphatidylethanolamine (PtdEtn) from phosphatidylserine (PtdSer). The sequence is that of Phosphatidylserine decarboxylase proenzyme from Chlamydia muridarum (strain MoPn / Nigg).